Here is an 80-residue protein sequence, read N- to C-terminus: MPFRFGTQPRRFPVEGGDSSIGLEPGLSSSATCNGKEMSPTRQLRRCPGSHCLTITDVPITVYAAMRKPPAQSSKEMHPK.

The interval M1–L44 is disordered.

The protein belongs to the FAM229 family.

This is Protein FAM229B (FAM229B) from Bos taurus (Bovine).